The chain runs to 188 residues: MKTAQEIRAGNVVMIGTEPMVVQKAEFNKSGRNSAVVKMKLKGLLNGSATETVFKADDKLEVVQLERKECTYSYFSDPLYVFMDTEYNQYDVEKDNLGDALNYMVDGMEDICEVTFYNEKAISVELPTTIVREVEYTEPAARGDTSGKVTKPARLKGTTYELAVAAFVEIGDKIEIDTRTGEFKRRVN.

This sequence belongs to the elongation factor P family.

It localises to the cytoplasm. Its pathway is protein biosynthesis; polypeptide chain elongation. In terms of biological role, involved in peptide bond synthesis. Stimulates efficient translation and peptide-bond synthesis on native or reconstituted 70S ribosomes in vitro. Probably functions indirectly by altering the affinity of the ribosome for aminoacyl-tRNA, thus increasing their reactivity as acceptors for peptidyl transferase. This is Elongation factor P from Aeromonas hydrophila subsp. hydrophila (strain ATCC 7966 / DSM 30187 / BCRC 13018 / CCUG 14551 / JCM 1027 / KCTC 2358 / NCIMB 9240 / NCTC 8049).